Consider the following 181-residue polypeptide: Endoribonuclease YbeY (181 aa).

Positions 140, 144, and 150 each coordinate Zn(2+).

It belongs to the endoribonuclease YbeY family. Zn(2+) is required as a cofactor.

It localises to the cytoplasm. Functionally, single strand-specific metallo-endoribonuclease involved in late-stage 70S ribosome quality control and in maturation of the 3' terminus of the 16S rRNA. This chain is Endoribonuclease YbeY, found in Dinoroseobacter shibae (strain DSM 16493 / NCIMB 14021 / DFL 12).